The sequence spans 178 residues: Ribonuclease M5 (178 aa).

Residues 4 to 100 form the Toprim domain; the sequence is NEFIVVEGRD…KIGVEHADLI (97 aa). The Mg(2+) site is built by E10, D56, and D58.

The protein belongs to the ribonuclease M5 family. Mg(2+) serves as cofactor.

It localises to the cytoplasm. The enzyme catalyses Endonucleolytic cleavage of RNA, removing 21 and 42 nucleotides, respectively, from the 5'- and 3'-termini of a 5S-rRNA precursor.. Required for correct processing of both the 5' and 3' ends of 5S rRNA precursor. Cleaves both sides of a double-stranded region yielding mature 5S rRNA in one step. This is Ribonuclease M5 from Staphylococcus aureus (strain NCTC 8325 / PS 47).